Reading from the N-terminus, the 539-residue chain is Putative dimethylaniline monooxygenase [N-oxide-forming] 6 (539 aa).

Residues 9–13, Glu-32, 40–41, and 61–62 contribute to the FAD site; these read GAGVS, LW, and NS. 195–198 is a binding site for NADP(+); the sequence is SGSD. The chain crosses the membrane as a helical span at residues 518 to 538; that stretch reads FYNLLKMLSFPLLLLAVTLTF.

This sequence belongs to the FMO family. It depends on FAD as a cofactor.

It localises to the microsome membrane. It is found in the endoplasmic reticulum membrane. It catalyses the reaction N,N-dimethylaniline + NADPH + O2 + H(+) = N,N-dimethylaniline N-oxide + NADP(+) + H2O. Its function is as follows. It is probable that this protein is only produced in very small quantity or not at all as the gene coding for it seems to be unable to produce full-length transcripts. The polypeptide is Putative dimethylaniline monooxygenase [N-oxide-forming] 6 (FMO6P) (Homo sapiens (Human)).